Here is a 361-residue protein sequence, read N- to C-terminus: Phosphoserine aminotransferase (361 aa).

Residues serine 9 and arginine 42 each contribute to the L-glutamate site. Residues 76–77, tryptophan 102, threonine 153, aspartate 173, and glutamine 196 contribute to the pyridoxal 5'-phosphate site; that span reads AR. Lysine 197 is subject to N6-(pyridoxal phosphate)lysine. 238-239 lines the pyridoxal 5'-phosphate pocket; sequence NT.

Belongs to the class-V pyridoxal-phosphate-dependent aminotransferase family. SerC subfamily. As to quaternary structure, homodimer. The cofactor is pyridoxal 5'-phosphate.

It localises to the cytoplasm. It carries out the reaction O-phospho-L-serine + 2-oxoglutarate = 3-phosphooxypyruvate + L-glutamate. The catalysed reaction is 4-(phosphooxy)-L-threonine + 2-oxoglutarate = (R)-3-hydroxy-2-oxo-4-phosphooxybutanoate + L-glutamate. The protein operates within amino-acid biosynthesis; L-serine biosynthesis; L-serine from 3-phospho-D-glycerate: step 2/3. It participates in cofactor biosynthesis; pyridoxine 5'-phosphate biosynthesis; pyridoxine 5'-phosphate from D-erythrose 4-phosphate: step 3/5. Functionally, catalyzes the reversible conversion of 3-phosphohydroxypyruvate to phosphoserine and of 3-hydroxy-2-oxo-4-phosphonooxybutanoate to phosphohydroxythreonine. The protein is Phosphoserine aminotransferase of Serratia proteamaculans (strain 568).